Here is a 418-residue protein sequence, read N- to C-terminus: Elongation factor Tu, chloroplastic (418 aa).

Residues 10–214 enclose the tr-type G domain; that stretch reads KPHVNIGTIG…NVDSYIPTPQ (205 aa). Residues 19–26 are G1; the sequence is GHVDHGKT. 19-26 is a GTP binding site; it reads GHVDHGKT. Threonine 26 lines the Mg(2+) pocket. The interval 60–64 is G2; sequence GITIN. The interval 81–84 is G3; that stretch reads DCPG. GTP contacts are provided by residues 81 to 85 and 136 to 139; these read DCPGH and NKED. The interval 136-139 is G4; the sequence is NKED. Residues 174-176 form a G5 region; sequence SAL.

This sequence belongs to the TRAFAC class translation factor GTPase superfamily. Classic translation factor GTPase family. EF-Tu/EF-1A subfamily.

It is found in the plastid. The protein localises to the chloroplast. The enzyme catalyses GTP + H2O = GDP + phosphate + H(+). In terms of biological role, GTP hydrolase that promotes the GTP-dependent binding of aminoacyl-tRNA to the A-site of ribosomes during protein biosynthesis. The sequence is that of Elongation factor Tu, chloroplastic (tufA) from Chlamydomonas reinhardtii (Chlamydomonas smithii).